The following is a 161-amino-acid chain: Nucleotide-binding protein Spea_3114 (161 aa).

It belongs to the YajQ family.

Functionally, nucleotide-binding protein. This Shewanella pealeana (strain ATCC 700345 / ANG-SQ1) protein is Nucleotide-binding protein Spea_3114.